The following is a 111-amino-acid chain: Ribosome-binding factor A (111 aa).

Belongs to the RbfA family. Monomer. Binds 30S ribosomal subunits, but not 50S ribosomal subunits or 70S ribosomes.

It is found in the cytoplasm. In terms of biological role, one of several proteins that assist in the late maturation steps of the functional core of the 30S ribosomal subunit. Associates with free 30S ribosomal subunits (but not with 30S subunits that are part of 70S ribosomes or polysomes). Required for efficient processing of 16S rRNA. May interact with the 5'-terminal helix region of 16S rRNA. This is Ribosome-binding factor A from Helicobacter pylori (strain ATCC 700392 / 26695) (Campylobacter pylori).